A 180-amino-acid polypeptide reads, in one-letter code: MEYKSCSDKYIWSADDSYFYKGLSELIVDIDELIYLSLEKIRKDFVFINLNTASLNEFIRRDSEWLSAVKGKQVVLIAARKSEALANYWYYNSDIRGVVYVGLSRDIRKELAYVINGRFLRKDIKKDKITDREMKIIRMTAQGMQPKSIARIENCSVKTVYTHRRNAEAKLYSKIYKLVQ.

Residues 122–180 enclose the HTH luxR-type domain; that stretch reads KDIKKDKITDREMKIIRMTAQGMQPKSIARIENCSVKTVYTHRRNAEAKLYSKIYKLVQ. The segment at residues 146–165 is a DNA-binding region (H-T-H motif); that stretch reads PKSIARIENCSVKTVYTHRR.

This sequence belongs to the EcpR/MatA family.

The protein localises to the cytoplasm. Functionally, part of the ecpRABCDE operon, which encodes the E.coli common pilus (ECP). ECP plays a dual role in early-stage biofilm development and host cell recognition. Positively regulates the expression of the ecp operon. This chain is HTH-type transcriptional regulator EcpR (ecpR), found in Klebsiella pneumoniae subsp. pneumoniae (strain ATCC 700721 / MGH 78578).